We begin with the raw amino-acid sequence, 126 residues long: Fluoride-specific ion channel FluC (126 aa).

Transmembrane regions (helical) follow at residues Leu-4–Trp-24, Gly-36–Leu-56, Leu-67–Tyr-85, and Ala-101–Val-121. Residues Gly-75 and Thr-78 each contribute to the Na(+) site.

This sequence belongs to the fluoride channel Fluc/FEX (TC 1.A.43) family.

The protein localises to the cell inner membrane. The catalysed reaction is fluoride(in) = fluoride(out). With respect to regulation, na(+) is not transported, but it plays an essential structural role and its presence is essential for fluoride channel function. In terms of biological role, fluoride-specific ion channel. Important for reducing fluoride concentration in the cell, thus reducing its toxicity. In Anaeromyxobacter sp. (strain K), this protein is Fluoride-specific ion channel FluC.